A 408-amino-acid chain; its full sequence is Putative gustatory receptor 58b (408 aa).

At 1-44 (MLHPKLGRVMNVVYYHSVVFALMSTTLRIRSCRKCLRLEKVSRT) the chain is on the cytoplasmic side. The helical transmembrane segment at 45–65 (YTIYSFFVGIFLFLNLYFMVP) threads the bilayer. Over 66-82 (RIMEDGYMKYNIVLQWN) the chain is Extracellular. A helical membrane pass occupies residues 83–103 (FFVMLFLRAIAVVSCYGTLWL). The Cytoplasmic segment spans residues 104 to 150 (KRHKIIQLYKYSLIYWKRFGHITRAIVDKKELLDLQESLARIMIRKI). A helical transmembrane segment spans residues 151 to 171 (ILLYSAFLCSTVLQYQLLSVI). Residues 172 to 193 (NPQIFLAFCARLTHFLHFLCVK) are Extracellular-facing. A helical transmembrane segment spans residues 194–214 (MGFFGVLVLLNHQFLVIHLAI). The Cytoplasmic portion of the chain corresponds to 215-245 (NALHGRKARKKWKALRSVAAMHLKTLRLARR). Residues 246–266 (IFDMFDIANATVFINMFMTAI) traverse the membrane as a helical segment. Residues 267 to 284 (NILYHAVQYSNSSIKSNG) are Extracellular-facing. Asparagine 277 carries an N-linked (GlcNAc...) asparagine glycan. A helical membrane pass occupies residues 285–305 (WGILFGNGLIVFNFWGTMALM). At 306–364 (EMLDSVVTSCNNTGQQLRQLSDLPKVGPKMQRELDVFTMQLRQNRLVYKICGIVELDKP) the chain is on the cytoplasmic side. The helical transmembrane segment at 365–385 (ACLSYIGSILSNVIILMQFDL) threads the bilayer. The Extracellular segment spans residues 386–408 (RRQRQPINDRQYLIHLMKNKTKV). The N-linked (GlcNAc...) asparagine glycan is linked to asparagine 404.

This sequence belongs to the insect chemoreceptor superfamily. Gustatory receptor (GR) family. Gr22e subfamily. Expressed in the adult labellar chemosensory neurons, labral sense organ and thorax. In larvae, is in neurons of the terminal external chemosensory organ as well as in the dorsal pharyngeal sense organ.

Its subcellular location is the cell membrane. Probable gustatory receptor which mediates acceptance or avoidance behavior, depending on its substrates. This chain is Putative gustatory receptor 58b (Gr58b), found in Drosophila melanogaster (Fruit fly).